The chain runs to 240 residues: Thiopurine S-methyltransferase (240 aa).

Residue 24–35 participates in S-adenosyl-L-methionine binding; that stretch reads WKDKWVTRHISF. Residue phenylalanine 35 coordinates substrate. Lysine 53 bears the N6-acetyllysine mark. S-adenosyl-L-methionine contacts are provided by residues leucine 64, glutamate 85, 129 to 130, and arginine 147; that span reads SI.

Belongs to the class I-like SAM-binding methyltransferase superfamily. TPMT family. Monomer.

It localises to the cytoplasm. It carries out the reaction S-adenosyl-L-methionine + a thiopurine = S-adenosyl-L-homocysteine + a thiopurine S-methylether.. The enzyme catalyses mercaptopurine + S-adenosyl-L-methionine = 6-methylthiopurine + S-adenosyl-L-homocysteine + H(+). Functionally, catalyzes the S-methylation of thiopurine drugs such as 6-mercaptopurine (also called mercaptopurine, 6-MP or its brand name Purinethol) using S-adenosyl-L-methionine as the methyl donor. TPMT activity modulates the cytotoxic effects of thiopurine prodrugs. A natural substrate for this enzyme has yet to be identified. This Mus spretus (Western Mediterranean mouse) protein is Thiopurine S-methyltransferase (Tpmt).